A 317-amino-acid polypeptide reads, in one-letter code: Terpene synthase 3 (317 aa).

Positions 96–101 (DDFYFE) match the DDxx(x)D/E motif motif. The short motif at 223–231 (NDMVSFERE) is the NDxxSxxxD/E motif element.

This sequence belongs to the terpene synthase family.

In terms of biological role, terpene synthase that converts its substrate farnesyl diphosphate (FPP) into the sesquiterpene CAS 137235-51-9 as a major product. Is also able to convert FPP into 9-epi-(E)-caryophyllene, alpha-neoclovene, beta-neoclovene, and 3 yet unidentified sesquiterpenes. This chain is Terpene synthase 3, found in Dictyostelium purpureum (Slime mold).